The chain runs to 1204 residues: Integrator complex subunit 2 (1204 aa).

A helical transmembrane segment spans residues 428–444 (FVSLSFCMLLAFSTLVS).

The protein belongs to the Integrator subunit 2 family. Component of the Integrator complex, composed of core subunits INTS1, INTS2, INTS3, INTS4, INTS5, INTS6, INTS7, INTS8, INTS9/RC74, INTS10, INTS11/CPSF3L, INTS12, INTS13, INTS14 and INTS15. The core complex associates with protein phosphatase 2A subunits PPP2CA and PPP2R1A, to form the Integrator-PP2A (INTAC) complex.

It is found in the nucleus. The protein resides in the nucleus membrane. The protein localises to the cytoplasm. Its function is as follows. Component of the integrator complex, a multiprotein complex that terminates RNA polymerase II (Pol II) transcription in the promoter-proximal region of genes. The integrator complex provides a quality checkpoint during transcription elongation by driving premature transcription termination of transcripts that are unfavorably configured for transcriptional elongation: the complex terminates transcription by (1) catalyzing dephosphorylation of the C-terminal domain (CTD) of Pol II subunit POLR2A/RPB1 and SUPT5H/SPT5, (2) degrading the exiting nascent RNA transcript via endonuclease activity and (3) promoting the release of Pol II from bound DNA. The integrator complex is also involved in terminating the synthesis of non-coding Pol II transcripts, such as enhancer RNAs (eRNAs), small nuclear RNAs (snRNAs), telomerase RNAs and long non-coding RNAs (lncRNAs). Mediates recruitment of cytoplasmic dynein to the nuclear envelope, probably as component of the integrator complex. This chain is Integrator complex subunit 2, found in Homo sapiens (Human).